The following is a 697-amino-acid chain: MARTTPLERMRNIGIAAHIDAGKTTTTERILFYTGKSHKIGEVHEGTAVMDWMEQEQERGITITSAATTCEWRDIQINIIDTPGHVDFTAEVERSLRVLDGAVAVFDAVAGVQPQSETVWRQADKYSVPRICFINKMDRVGADFYHSVDTIVDRLKCRPVPIQLPIGAEEKFLGIVDLVEMRGIIWRDETMGAKYDVIEIPDDLKDKAKEYREHMIEAISEHDEALMHKFIEGQPISNDEIRAGIRKATIALQIFPVICGTAFKNKGVQTMLDAVVDYLPSPLDVPAIEGLDVDDPEKTLIRHASDNEPFSALVFKIMTDPYVGQLAFFRVYSGSMKSGGSVFNVAKRRNERVGRLLRMHANKREEIQEIFAGDICAAVGLKTISTGDTICDDAHPIVLEAIDFPMPVIQLAVEPKTKADQEKMGMAIQKLAQEDPTFRVYTDPETGQTILSGMGELHLEIIVDRMMREFGVGANVGKPQVAYRETIRKNSEAEGRHVKQTGGHGQYGHVKIRVEPLPSGTGFEFVNDVTGGRIPKEYINPTEMGIKEALEGGILAGYPMSDVKVTLYDGSYHDVDSSEMAFKIAGSMAIKEAAKRAKPVLLEPIMAVEVVVPEDYMGDVIGDLYGRRGRIEGTELRGNTRIIKSMVPLSAMFGYATDIRSRTQGRGSFTMHFGKYEEVPAAQAEEIVSKVQGKTTR.

The tr-type G domain occupies 8-283 (ERMRNIGIAA…AVVDYLPSPL (276 aa)). GTP is bound by residues 17 to 24 (AHIDAGKT), 81 to 85 (DTPGH), and 135 to 138 (NKMD).

It belongs to the TRAFAC class translation factor GTPase superfamily. Classic translation factor GTPase family. EF-G/EF-2 subfamily.

The protein localises to the cytoplasm. Its function is as follows. Catalyzes the GTP-dependent ribosomal translocation step during translation elongation. During this step, the ribosome changes from the pre-translocational (PRE) to the post-translocational (POST) state as the newly formed A-site-bound peptidyl-tRNA and P-site-bound deacylated tRNA move to the P and E sites, respectively. Catalyzes the coordinated movement of the two tRNA molecules, the mRNA and conformational changes in the ribosome. In Solibacter usitatus (strain Ellin6076), this protein is Elongation factor G.